Reading from the N-terminus, the 310-residue chain is Ribonuclease Z (310 aa).

Zn(2+)-binding residues include H60, H62, D64, H65, H140, D209, and H269. The active-site Proton acceptor is the D64.

Belongs to the RNase Z family. Homodimer. Zn(2+) is required as a cofactor.

The catalysed reaction is Endonucleolytic cleavage of RNA, removing extra 3' nucleotides from tRNA precursor, generating 3' termini of tRNAs. A 3'-hydroxy group is left at the tRNA terminus and a 5'-phosphoryl group is left at the trailer molecule.. Zinc phosphodiesterase, which displays some tRNA 3'-processing endonuclease activity. Probably involved in tRNA maturation, by removing a 3'-trailer from precursor tRNA. This chain is Ribonuclease Z, found in Methanococcus maripaludis (strain C7 / ATCC BAA-1331).